We begin with the raw amino-acid sequence, 392 residues long: Formate-dependent phosphoribosylglycinamide formyltransferase (392 aa).

Residues 22–23 (EL) and E82 each bind N(1)-(5-phospho-beta-D-ribosyl)glycinamide. ATP-binding positions include R114, K155, 160–165 (SSGKGQ), 195–198 (EGVV), and E203. The ATP-grasp domain occupies 119–308 (RLAAEELQLP…EFALHVRAFL (190 aa)). Mg(2+) contacts are provided by E267 and E279. N(1)-(5-phospho-beta-D-ribosyl)glycinamide is bound by residues D286, K355, and 362–363 (RR).

Belongs to the PurK/PurT family. In terms of assembly, homodimer.

The catalysed reaction is N(1)-(5-phospho-beta-D-ribosyl)glycinamide + formate + ATP = N(2)-formyl-N(1)-(5-phospho-beta-D-ribosyl)glycinamide + ADP + phosphate + H(+). It functions in the pathway purine metabolism; IMP biosynthesis via de novo pathway; N(2)-formyl-N(1)-(5-phospho-D-ribosyl)glycinamide from N(1)-(5-phospho-D-ribosyl)glycinamide (formate route): step 1/1. Involved in the de novo purine biosynthesis. Catalyzes the transfer of formate to 5-phospho-ribosyl-glycinamide (GAR), producing 5-phospho-ribosyl-N-formylglycinamide (FGAR). Formate is provided by PurU via hydrolysis of 10-formyl-tetrahydrofolate. The protein is Formate-dependent phosphoribosylglycinamide formyltransferase of Shigella flexneri.